Reading from the N-terminus, the 204-residue chain is Large ribosomal subunit protein uL4 (204 aa).

The tract at residues 49 to 75 (TKGRSEVSGGGKKPWRQKGRGGARAGS) is disordered.

It belongs to the universal ribosomal protein uL4 family. As to quaternary structure, part of the 50S ribosomal subunit.

In terms of biological role, one of the primary rRNA binding proteins, this protein initially binds near the 5'-end of the 23S rRNA. It is important during the early stages of 50S assembly. It makes multiple contacts with different domains of the 23S rRNA in the assembled 50S subunit and ribosome. Functionally, forms part of the polypeptide exit tunnel. This chain is Large ribosomal subunit protein uL4, found in Campylobacter hominis (strain ATCC BAA-381 / DSM 21671 / CCUG 45161 / LMG 19568 / NCTC 13146 / CH001A).